The following is a 701-amino-acid chain: UvrABC system protein B (701 aa).

In terms of domain architecture, Helicase ATP-binding spans 28–188; it reads RRIRAGERDV…VDVQYTRNDL (161 aa). 41–48 contributes to the ATP binding site; that stretch reads GATGTGKS. The Beta-hairpin signature appears at 94–117; it reads YYDYYQPEAYIAQTDTYIEKDSSI. The Helicase C-terminal domain maps to 432 to 598; it reads QIDDLIGEIR…PLRKKIADIL (167 aa). The tract at residues 606–636 is disordered; the sequence is DDTEAAESVPIGGSGRNSSRGRRAQGEPGRA. The 36-residue stretch at 656–691 folds into the UVR domain; it reads ADLIKDLTSQMMVAARDLQFELAARFRDEIADLKKE.

Belongs to the UvrB family. As to quaternary structure, forms a heterotetramer with UvrA during the search for lesions. Interacts with UvrC in an incision complex.

It is found in the cytoplasm. Functionally, the UvrABC repair system catalyzes the recognition and processing of DNA lesions. A damage recognition complex composed of 2 UvrA and 2 UvrB subunits scans DNA for abnormalities. Upon binding of the UvrA(2)B(2) complex to a putative damaged site, the DNA wraps around one UvrB monomer. DNA wrap is dependent on ATP binding by UvrB and probably causes local melting of the DNA helix, facilitating insertion of UvrB beta-hairpin between the DNA strands. Then UvrB probes one DNA strand for the presence of a lesion. If a lesion is found the UvrA subunits dissociate and the UvrB-DNA preincision complex is formed. This complex is subsequently bound by UvrC and the second UvrB is released. If no lesion is found, the DNA wraps around the other UvrB subunit that will check the other stand for damage. This chain is UvrABC system protein B, found in Mycobacterium ulcerans (strain Agy99).